Consider the following 311-residue polypeptide: 2-phospho-L-lactate transferase (311 aa).

7,8-didemethyl-8-hydroxy-5-deazariboflavin contacts are provided by D52 and R91.

This sequence belongs to the CofD family. Homodimer. Mg(2+) is required as a cofactor.

The catalysed reaction is (2S)-lactyl-2-diphospho-5'-guanosine + 7,8-didemethyl-8-hydroxy-5-deazariboflavin = oxidized coenzyme F420-0 + GMP + H(+). Its pathway is cofactor biosynthesis; coenzyme F420 biosynthesis. Inhibited by EDTA in vitro. In terms of biological role, catalyzes the transfer of the 2-phospholactate moiety from (2S)-lactyl-2-diphospho-5'-guanosine to 7,8-didemethyl-8-hydroxy-5-deazariboflavin (FO) with the formation of oxidized coenzyme F420-0 and GMP. This is 2-phospho-L-lactate transferase from Methanocaldococcus jannaschii (strain ATCC 43067 / DSM 2661 / JAL-1 / JCM 10045 / NBRC 100440) (Methanococcus jannaschii).